Reading from the N-terminus, the 402-residue chain is Probable tRNA pseudouridine synthase D (402 aa).

The active-site Nucleophile is the Asp94. A TRUD domain is found at 175 to 364 (YILNYYGTQR…PGTRRKLITK (190 aa)).

It belongs to the pseudouridine synthase TruD family.

The enzyme catalyses uridine(13) in tRNA = pseudouridine(13) in tRNA. Could be responsible for synthesis of pseudouridine from uracil-13 in transfer RNAs. The protein is Probable tRNA pseudouridine synthase D of Methanococcus aeolicus (strain ATCC BAA-1280 / DSM 17508 / OCM 812 / Nankai-3).